The following is a 147-amino-acid chain: Ubiquitin-conjugating enzyme E2 D2 (147 aa).

Positions 1–147 constitute a UBC core domain; the sequence is MALKRIHKEL…AREWTQKYAM (147 aa). Cys85 (glycyl thioester intermediate) is an active-site residue.

It belongs to the ubiquitin-conjugating enzyme family. As to quaternary structure, interacts with SCF (SKP1-CUL1-F-box protein) E3 ubiquitin ligase complex. Interacts with CNOT4 (via RING domain). Interacts with E3 ubiquitin-protein ligases CBLC, PJA1 and PJA2. Interacts with PDZRN3. Interacts with PPP1R11. Interacts with E3 ubiquitin-protein ligase PHF7; the interaction inhibits cleavage of PHF7 and promotes association of the complex with the nucleosome core particle.

It carries out the reaction S-ubiquitinyl-[E1 ubiquitin-activating enzyme]-L-cysteine + [E2 ubiquitin-conjugating enzyme]-L-cysteine = [E1 ubiquitin-activating enzyme]-L-cysteine + S-ubiquitinyl-[E2 ubiquitin-conjugating enzyme]-L-cysteine.. The catalysed reaction is S-ubiquitinyl-[E1 ubiquitin-activating enzyme]-L-cysteine + [acceptor protein]-L-lysine = [E1 ubiquitin-activating enzyme]-L-cysteine + N(6)-monoubiquitinyl-[acceptor protein]-L-lysine.. It functions in the pathway protein modification; protein ubiquitination. Functionally, accepts ubiquitin from the E1 complex and catalyzes its covalent attachment to other proteins. In vitro catalyzes 'Lys-48'-linked polyubiquitination. Mediates the selective degradation of short-lived and abnormal proteins. Functions in the E6/E6-AP-induced ubiquitination of p53/TP53. Mediates ubiquitination of PEX5 and SQSTM1 and autoubiquitination of STUB1 and TRAF6. Involved in the signal-induced conjugation and subsequent degradation of NFKBIA, FBXW2-mediated GCM1 ubiquitination and degradation, MDM2-dependent degradation of p53/TP53 and the activation of MAVS in the mitochondria by RIGI in response to viral infection. Essential for viral activation of IRF3. In Bos taurus (Bovine), this protein is Ubiquitin-conjugating enzyme E2 D2 (UBE2D2).